The primary structure comprises 232 residues: Ribose-5-phosphate isomerase A (232 aa).

Residues threonine 28–threonine 31, aspartate 83–aspartate 86, and lysine 96–glycine 99 each bind substrate. Glutamate 105 acts as the Proton acceptor in catalysis. Lysine 123 lines the substrate pocket.

This sequence belongs to the ribose 5-phosphate isomerase family. Homodimer.

The catalysed reaction is aldehydo-D-ribose 5-phosphate = D-ribulose 5-phosphate. It participates in carbohydrate degradation; pentose phosphate pathway; D-ribose 5-phosphate from D-ribulose 5-phosphate (non-oxidative stage): step 1/1. In terms of biological role, catalyzes the reversible conversion of ribose-5-phosphate to ribulose 5-phosphate. The sequence is that of Ribose-5-phosphate isomerase A from Rhodopseudomonas palustris (strain BisB18).